The chain runs to 407 residues: Argininosuccinate synthase (407 aa).

ATP-binding positions include 10–18 (AYSGGLDTS) and A37. L-citrulline-binding residues include Y88 and S93. G118 is a binding site for ATP. Residues T120, N124, and D125 each contribute to the L-aspartate site. An L-citrulline-binding site is contributed by N124. Positions 128, 180, 189, 265, and 277 each coordinate L-citrulline.

This sequence belongs to the argininosuccinate synthase family. Type 1 subfamily. As to quaternary structure, homotetramer.

The protein localises to the cytoplasm. It catalyses the reaction L-citrulline + L-aspartate + ATP = 2-(N(omega)-L-arginino)succinate + AMP + diphosphate + H(+). Its pathway is amino-acid biosynthesis; L-arginine biosynthesis; L-arginine from L-ornithine and carbamoyl phosphate: step 2/3. The chain is Argininosuccinate synthase from Alcanivorax borkumensis (strain ATCC 700651 / DSM 11573 / NCIMB 13689 / SK2).